A 298-amino-acid chain; its full sequence is Inosose dehydratase (298 aa).

This sequence belongs to the IolE/MocC family. Requires glutathione as cofactor. Co(2+) is required as a cofactor. Mn(2+) serves as cofactor.

It carries out the reaction scyllo-inosose = 3D-3,5/4-trihydroxycyclohexane-1,2-dione + H2O. The protein operates within polyol metabolism; myo-inositol degradation into acetyl-CoA; acetyl-CoA from myo-inositol: step 2/7. In terms of biological role, catalyzes the dehydration of inosose (2-keto-myo-inositol, 2KMI or 2,4,6/3,5-pentahydroxycyclohexanone) to 3D-(3,5/4)-trihydroxycyclohexane-1,2-dione (D-2,3-diketo-4-deoxy-epi-inositol). The chain is Inosose dehydratase from Geobacillus thermodenitrificans (strain NG80-2).